A 157-amino-acid chain; its full sequence is Cytochrome c-type biogenesis protein CcmE (157 aa).

At 1 to 8 (MNPLRRKR) the chain is on the cytoplasmic side. A helical; Signal-anchor for type II membrane protein membrane pass occupies residues 9 to 29 (LLIILAVLGGVGLALTLALSA). Over 30-157 (LKENINLFYT…ASMPARQADR (128 aa)) the chain is Periplasmic. Positions 124 and 128 each coordinate heme. The segment at 132 to 157 (EVSKALRESGQATPAPASMPARQADR) is disordered.

Belongs to the CcmE/CycJ family.

The protein localises to the cell inner membrane. Its function is as follows. Heme chaperone required for the biogenesis of c-type cytochromes. Transiently binds heme delivered by CcmC and transfers the heme to apo-cytochromes in a process facilitated by CcmF and CcmH. In Pseudomonas syringae pv. tomato (strain ATCC BAA-871 / DC3000), this protein is Cytochrome c-type biogenesis protein CcmE.